The following is a 281-amino-acid chain: Hepatitis A virus cellular receptor 2 homolog (281 aa).

The first 19 residues, 1-19, serve as a signal peptide directing secretion; that stretch reads MFSGLTLNCVLLLLQLLLA. The region spanning 20–125 is the Ig-like V-type domain; the sequence is RSLENAYVFE…PGLMNDKKLE (106 aa). Residues 20-193 are Extracellular-facing; that stretch reads RSLENAYVFE…KDSGETIRTA (174 aa). Intrachain disulfides connect Cys-38/Cys-111, Cys-52/Cys-63, and Cys-58/Cys-110. Positions 61 and 62 each coordinate a 1,2-diacyl-sn-glycero-3-phospho-L-serine. 2 N-linked (GlcNAc...) asparagine glycosylation sites follow: Asn-74 and Asn-100. An a 1,2-diacyl-sn-glycero-3-phospho-L-serine-binding site is contributed by Arg-112. Phe-115 and Gly-117 together coordinate Ca(2+). Position 119 (Met-119) interacts with a 1,2-diacyl-sn-glycero-3-phospho-L-serine. Ca(2+) is bound at residue Asn-120. The segment at 139–160 is disordered; the sequence is QTAHGDSTTASPRTLTTERNGS. Thr-146 carries O-linked (GalNAc...) threonine glycosylation. Residue Asn-172 is glycosylated (N-linked (GlcNAc...) asparagine). Residues 194–214 form a helical membrane-spanning segment; it reads IHIGVGVSAGLTLALIIGVLI. The Cytoplasmic segment spans residues 215–281; it reads LKWYSCKKKK…YCYVNSQQPS (67 aa). Residues 252 to 270 are interaction with BAG6; that stretch reads EENIYTIEENVYEVENSNE. At Tyr-256 the chain carries Phosphotyrosine; by ITK.

Belongs to the immunoglobulin superfamily. TIM family. In terms of assembly, interacts with HMGB1; impairs HMGB1 binding to B-DNA and likely HMGB1-mediated innate immune response. Interacts with BAG6. Interacts (phosphorylated) with PIK3R1 and PIK3R2. Interacts (not dependent on its phosphorylation status) with FYN. Interacts (in basal state T-cells) with VAV1; AKT1/2, LCP2, ZAP70, SYK, PIK3R1, FYN, SH3BP2 and SH2D2A. Interacts (in activated T-cells) with LCK and PLCG. Interacts with ILF3; this interaction promotes ILF3 ubiquitination and degradation. Post-translationally, phosphorylated on tyrosine residues; modestly increased after TCR/CD28 stimulation. Can be phosphorylated in the cytoplasmic domain by FYN. Phosphorylation at Tyr-256 is increased by stimulation with ligand LGALS9. In terms of processing, N-glycosylated. As to expression, expressed in T-helper type 1 lymphocytes. Not expressed by naive T-cells but up-regulated as they differentiate into T-helper-1 cells. Also expressed by differentiated type 1 CD8+ cytotoxic T-cells. Expressed on peritoneal exudate macrophages, monocytes, and splenic dendritic cells (DCs). Expression on natural killer (NK) cells is inversely associated with IFN-gamma production during the initial 24 hours of LPS-induced endotoxic shock. Expressed on mast cells.

It localises to the membrane. The protein resides in the cell junction. Its subcellular location is the secreted. Functionally, cell surface receptor implicated in modulating innate and adaptive immune responses. Generally accepted to have an inhibiting function. Reports on stimulating functions suggest that the activity may be influenced by the cellular context and/or the respective ligand. Regulates macrophage activation. Inhibits T-helper type 1 lymphocyte (Th1)-mediated auto- and alloimmune responses and promotes immunological tolerance. In CD8+ cells attenuates TCR-induced signaling, specifically by blocking NF-kappaB and NFAT promoter activities resulting in the loss of IL-2 secretion. The function may implicate its association with LCK proposed to impair phosphorylation of TCR subunits. In contrast, shown to activate TCR-induced signaling in T-cells probably implicating ZAP70, LCP2, LCK and FYN. Expressed on Treg cells can inhibit Th17 cell responses. Receptor for LGALS9. Binding to LGALS9 is believed to result in suppression of T-cell responses; the resulting apoptosis of antigen-specific cells may implicate HAVCR2 phosphorylation and disruption of its association with BAG6. Binding to LGALS9 is proposed to be involved in innate immune response to intracellular pathogens. Expressed on Th1 cells interacts with LGALS9 expressed on Mycobacterium tuberculosis-infected macrophages to stimulate antibactericidal activity including IL-1 beta secretion and to restrict intracellular bacterial growth. However, the function as receptor for LGALS9 has been challenged. Also reported to enhance CD8+ T-cell responses to an acute infection such as by Listeria monocytogenes. Receptor for phosphatidylserine (PtSer); PtSer-binding is calcium-dependent. May recognize PtSer on apoptotic cells leading to their phagocytosis. Mediates the engulfment of apoptotic cells by dendritic cells. Expressed on T-cells, promotes conjugation but not engulfment of apoptotic cells. Expressed on dendritic cells (DCs) positively regulates innate immune response and in synergy with Toll-like receptors promotes secretion of TNF-alpha. In tumor-imfiltrating DCs suppresses nucleic acid-mediated innate immune repsonse by interaction with HMGB1 and interfering with nucleic acid-sensing and trafficking of nucleid acids to endosomes. Can enhance mast cell production of Th2 cytokines Il-4, IL-6 and IL-13. Expressed on natural killer (NK) cells acts as a coreceptor to enhance IFN-gamma production in response to LGALS9. In contrast, shown to suppress NK cell-mediated cytotoxicity. Negatively regulates NK cell function in LPS-induced endotoxic shock. This chain is Hepatitis A virus cellular receptor 2 homolog (Havcr2), found in Mus musculus (Mouse).